The primary structure comprises 242 residues: UPF0273 protein TM_0370 (242 aa).

Residues 3–242 (KRVKTGIPGM…IYPSEGGEGR (240 aa)) enclose the KaiC domain. Position 30–37 (30–37 (GGPGTGKT)) interacts with ATP.

Belongs to the UPF0273 family.

The sequence is that of UPF0273 protein TM_0370 from Thermotoga maritima (strain ATCC 43589 / DSM 3109 / JCM 10099 / NBRC 100826 / MSB8).